The following is a 267-amino-acid chain: 2-keto-3-deoxy-L-rhamnonate aldolase (267 aa).

The Proton acceptor role is filled by histidine 49. Glutamine 151 contributes to the substrate binding site. Glutamate 153 is a Mg(2+) binding site. 2 residues coordinate substrate: alanine 178 and aspartate 179. Residue aspartate 179 participates in Mg(2+) binding.

It belongs to the HpcH/HpaI aldolase family. KDR aldolase subfamily. As to quaternary structure, homohexamer. Mg(2+) serves as cofactor.

The enzyme catalyses 2-dehydro-3-deoxy-L-rhamnonate = (S)-lactaldehyde + pyruvate. In terms of biological role, catalyzes the reversible retro-aldol cleavage of 2-keto-3-deoxy-L-rhamnonate (KDR) to pyruvate and lactaldehyde. This Salmonella typhi protein is 2-keto-3-deoxy-L-rhamnonate aldolase.